We begin with the raw amino-acid sequence, 433 residues long: T-box transcription factor T (433 aa).

Positions 49–217 form a DNA-binding region, T-box; the sequence is LWLRFKELTN…YNPFAKAFLD (169 aa).

As to quaternary structure, monomer. Binds DNA as a monomer.

Its subcellular location is the nucleus. Involved in the transcriptional regulation of genes required for mesoderm formation and differentiation. Binds to a palindromic site (called T site) and activates gene transcription when bound to such a site. This is T-box transcription factor T from Gallus gallus (Chicken).